Reading from the N-terminus, the 558-residue chain is Adenine deaminase (558 aa).

This sequence belongs to the metallo-dependent hydrolases superfamily. Adenine deaminase family. The cofactor is Mn(2+).

It catalyses the reaction adenine + H2O + H(+) = hypoxanthine + NH4(+). The protein is Adenine deaminase of Methanoregula boonei (strain DSM 21154 / JCM 14090 / 6A8).